The following is a 426-amino-acid chain: Serine--tRNA ligase (426 aa).

L-serine is bound at residue 233–235 (TAE). ATP is bound at residue 264 to 266 (RSE). Glutamate 287 provides a ligand contact to L-serine. 351–354 (EISS) contacts ATP. Residue serine 387 participates in L-serine binding.

It belongs to the class-II aminoacyl-tRNA synthetase family. Type-1 seryl-tRNA synthetase subfamily. Homodimer. The tRNA molecule binds across the dimer.

It localises to the cytoplasm. The catalysed reaction is tRNA(Ser) + L-serine + ATP = L-seryl-tRNA(Ser) + AMP + diphosphate + H(+). The enzyme catalyses tRNA(Sec) + L-serine + ATP = L-seryl-tRNA(Sec) + AMP + diphosphate + H(+). It functions in the pathway aminoacyl-tRNA biosynthesis; selenocysteinyl-tRNA(Sec) biosynthesis; L-seryl-tRNA(Sec) from L-serine and tRNA(Sec): step 1/1. In terms of biological role, catalyzes the attachment of serine to tRNA(Ser). Is also able to aminoacylate tRNA(Sec) with serine, to form the misacylated tRNA L-seryl-tRNA(Sec), which will be further converted into selenocysteinyl-tRNA(Sec). The sequence is that of Serine--tRNA ligase from Clostridium botulinum (strain Kyoto / Type A2).